We begin with the raw amino-acid sequence, 241 residues long: Octanoyltransferase (241 aa).

A BPL/LPL catalytic domain is found at Gly49–Glu233. Substrate-binding positions include Arg87–His94, Ala162–Gly164, and Gly175–Ser177. Catalysis depends on Cys193, which acts as the Acyl-thioester intermediate.

This sequence belongs to the LipB family.

Its subcellular location is the cytoplasm. The catalysed reaction is octanoyl-[ACP] + L-lysyl-[protein] = N(6)-octanoyl-L-lysyl-[protein] + holo-[ACP] + H(+). The protein operates within protein modification; protein lipoylation via endogenous pathway; protein N(6)-(lipoyl)lysine from octanoyl-[acyl-carrier-protein]: step 1/2. Functionally, catalyzes the transfer of endogenously produced octanoic acid from octanoyl-acyl-carrier-protein onto the lipoyl domains of lipoate-dependent enzymes. Lipoyl-ACP can also act as a substrate although octanoyl-ACP is likely to be the physiological substrate. The protein is Octanoyltransferase of Nitrobacter hamburgensis (strain DSM 10229 / NCIMB 13809 / X14).